Consider the following 285-residue polypeptide: ATP synthase gamma chain (285 aa).

The protein belongs to the ATPase gamma chain family. In terms of assembly, F-type ATPases have 2 components, CF(1) - the catalytic core - and CF(0) - the membrane proton channel. CF(1) has five subunits: alpha(3), beta(3), gamma(1), delta(1), epsilon(1). CF(0) has three main subunits: a, b and c.

It localises to the cell membrane. In terms of biological role, produces ATP from ADP in the presence of a proton gradient across the membrane. The gamma chain is believed to be important in regulating ATPase activity and the flow of protons through the CF(0) complex. The chain is ATP synthase gamma chain from Geobacillus kaustophilus (strain HTA426).